The primary structure comprises 550 residues: Probable asparagine synthetase [glutamine-hydrolyzing] (550 aa).

Residue Cys2 is the For GATase activity of the active site. The Glutamine amidotransferase type-2 domain maps to 2–189 (CGIICFIQYG…PNQYVTIDLS (188 aa)). L-glutamine is bound by residues 53–57 (RLAIM), 78–80 (NGE), and Asp100. The region spanning 213–530 (YYQSHKSLID…GGRDHIIPHY (318 aa)) is the Asparagine synthetase domain. Residues Leu256, Val284, and 360–361 (SG) contribute to the ATP site.

The enzyme catalyses L-aspartate + L-glutamine + ATP + H2O = L-asparagine + L-glutamate + AMP + diphosphate + H(+). The protein operates within amino-acid biosynthesis; L-asparagine biosynthesis; L-asparagine from L-aspartate (L-Gln route): step 1/1. The polypeptide is Probable asparagine synthetase [glutamine-hydrolyzing] (Acanthamoeba polyphaga mimivirus (APMV)).